Here is a 451-residue protein sequence, read N- to C-terminus: Endosomal transmembrane epsin interactor 1 (451 aa).

Positions 1 to 29 (MILLVNLFVLLSVVCILLNLAGFILGCQG) are cleaved as a signal peptide. Residues 30 to 85 (AQFVSSVPRCDLVDLGEGKICFCCEEFQPAKCTDKENALKLFPVQPCSAVHLLLKK) are Lumenal-facing. A helical transmembrane segment spans residues 86-106 (VLFALCALNALTTTVCLVAAA). Residues 107-451 (LRYLQIFASR…LIGVIRETVL (345 aa)) are Cytoplasmic-facing. The mediates interaction with EPN1 stretch occupies residues 107 to 451 (LRYLQIFASR…LIGVIRETVL (345 aa)). Short sequence motifs (PPxY; mediates interaction with ITCH) lie at residues 148 to 151 (PPSY) and 194 to 197 (PPPY). Positions 204 to 213 (TDQEQESSFQ) are enriched in polar residues. Residues 204 to 224 (TDQEQESSFQMPEGPETAASP) form a disordered region. A Glycyl lysine isopeptide (Lys-Gly) (interchain with G-Cter in ubiquitin) cross-link involves residue Lys274. Ser275 is modified (phosphoserine). A Glycyl lysine isopeptide (Lys-Gly) (interchain with G-Cter in ubiquitin) cross-link involves residue Lys365.

The protein belongs to the ENTREP family. In terms of assembly, interacts with ITCH; enhances the ubiquitination of CXCR4 by ITCH and the subsequent endocytosis and desensitization of the receptor. Interacts with EPN1.

It localises to the early endosome membrane. It is found in the late endosome membrane. The protein localises to the recycling endosome membrane. Its subcellular location is the cell membrane. In terms of biological role, functions as an activator of the E3 ubiquitin protein ligase ITCH in the ubiquitination of the CXCL12-activated CXCR4 receptor. Thereby, triggers CXCR4 endocytosis and desensitization, negatively regulating the CXCL12/CXCR4 signaling pathway. The chain is Endosomal transmembrane epsin interactor 1 from Mus musculus (Mouse).